A 208-amino-acid chain; its full sequence is LexA repressor (208 aa).

Positions 29–49 (IREIGDSLNINSTSTVHNNIL) form a DNA-binding region, H-T-H motif. Catalysis depends on for autocatalytic cleavage activity residues Ser131 and Lys168.

Belongs to the peptidase S24 family. Homodimer.

It carries out the reaction Hydrolysis of Ala-|-Gly bond in repressor LexA.. Represses a number of genes involved in the response to DNA damage (SOS response), including recA and lexA. In the presence of single-stranded DNA, RecA interacts with LexA causing an autocatalytic cleavage which disrupts the DNA-binding part of LexA, leading to derepression of the SOS regulon and eventually DNA repair. This is LexA repressor from Finegoldia magna (strain ATCC 29328 / DSM 20472 / WAL 2508) (Peptostreptococcus magnus).